We begin with the raw amino-acid sequence, 685 residues long: Polyphosphate kinase (685 aa).

Residue Asn-45 participates in ATP binding. Positions 372 and 402 each coordinate Mg(2+). A PLD phosphodiesterase 1 domain is found at 427–461; the sequence is PGLKIHAKLFLISRKEGDDVVRYAHIGTGNFNEKT. His-432 acts as the Phosphohistidine intermediate in catalysis. ATP is bound by residues Tyr-465, Arg-561, and His-589. The PLD phosphodiesterase 2 domain maps to 584-614; that stretch reads DRYLEHDRIYIFDNAGDKQVYLSSADWMTRN.

This sequence belongs to the polyphosphate kinase 1 (PPK1) family. The cofactor is Mg(2+). Post-translationally, an intermediate of this reaction is the autophosphorylated ppk in which a phosphate is covalently linked to a histidine residue through a N-P bond.

It carries out the reaction [phosphate](n) + ATP = [phosphate](n+1) + ADP. In terms of biological role, catalyzes the reversible transfer of the terminal phosphate of ATP to form a long-chain polyphosphate (polyP). This Klebsiella pneumoniae protein is Polyphosphate kinase.